A 60-amino-acid polypeptide reads, in one-letter code: MSGKLKITQVRSLVGRNEKHRRIVRALGLKRMHMTVEHTNNPAIMGMVKKIPHLVTVEEV.

This sequence belongs to the universal ribosomal protein uL30 family. In terms of assembly, part of the 50S ribosomal subunit.

The protein is Large ribosomal subunit protein uL30 of Desulforapulum autotrophicum (strain ATCC 43914 / DSM 3382 / VKM B-1955 / HRM2) (Desulfobacterium autotrophicum).